The following is a 297-amino-acid chain: MAAVVGTGSDGGGDESGDRRTADAADADGDGDGGERAWLRFKADVRACLADLRNRKGGITLHRAIVKDMVSASSNPGARRSSSSVVKMAREELDRLMPFLLDDFLDNMPGLKAAFTGKAEPGAEGDDGEDEEEGEAQGVGKDAVDSSSSSSGGGGVLSCTAWQQVLGRTVPAVSPTLALVLACGYLAMAPRQYRALALVPMILPGKTGGGVDGALTREGLSLLKKLRPGISGLADKDKQWLEWVIARLAAEFAVQPAGDGHEPEPKRPELPPTAVQREPPAEEQHKPTAGARDSPNM.

Disordered regions lie at residues 1–34 (MAAV…GDGG), 115–151 (FTGK…SSSS), and 255–297 (QPAG…SPNM). A compositionally biased stretch (acidic residues) spans 123 to 135 (AEGDDGEDEEEGE). The segment covering 136-150 (AQGVGKDAVDSSSSS) has biased composition (low complexity). Residues 259–269 (DGHEPEPKRPE) are compositionally biased toward basic and acidic residues.

The protein is Ezy-1 protein (Ezy-1) of Chlamydomonas reinhardtii (Chlamydomonas smithii).